Consider the following 1454-residue polypeptide: Receptor-type tyrosine-protein phosphatase T (1454 aa).

An N-terminal signal peptide occupies residues 1 to 29 (MGSLGGLALCLLRLLLLGLQRPPLPGAGA). Residues 30–770 (QSAAGGCSFD…EKQVDNTVKM (741 aa)) are Extracellular-facing. The MAM domain occupies 34 to 195 (GGCSFDEHYS…VRVLAHPCRK (162 aa)). 4 N-linked (GlcNAc...) asparagine glycosylation sites follow: asparagine 82, asparagine 102, asparagine 141, and asparagine 212. The Ig-like C2-type domain occupies 197–288 (PHFLRLQNVE…SGVSNYAELI (92 aa)). The cysteines at positions 217 and 271 are disulfide-linked. 3 consecutive Fibronectin type-III domains span residues 295 to 388 (PIAP…TKCA), 393 to 487 (GPQN…TEED), and 488 to 594 (VPGA…SAPS). Asparagine 425, asparagine 514, asparagine 551, asparagine 605, asparagine 658, and asparagine 688 each carry an N-linked (GlcNAc...) asparagine glycan. The 98-residue stretch at 670-767 (AELKPSNLPV…VEPEKQVDNT (98 aa)) folds into the Fibronectin type-III 4 domain. Residues 771 to 791 (AGVIAGLLMFIIILLGVMLTI) traverse the membrane as a helical segment. The Cytoplasmic segment spans residues 792–1454 (KRRKLAKKQK…EVALEYLSSF (663 aa)). Residues 800–852 (QKETQSGAQREMGPVASTDKPTAKLGTNRNDEGFSSSSQDVNGFTDGSRGELS) are disordered. Positions 824 to 841 (LGTNRNDEGFSSSSQDVN) are enriched in polar residues. Tyrosine-protein phosphatase domains follow at residues 902-1156 (FKEE…ILEA) and 1188-1450 (IKDE…ALEY). Residues aspartate 1065, 1097 to 1103 (CSAGAGR), and glutamine 1141 each bind substrate. The active-site Phosphocysteine intermediate is the cysteine 1097. Serine 1221 bears the Phosphoserine mark. The Phosphocysteine intermediate role is filled by cysteine 1391.

This sequence belongs to the protein-tyrosine phosphatase family. Receptor class 2B subfamily. Expression is restricted to the CNS. Distributed throughout the brain and spinal cord.

The protein resides in the membrane. It carries out the reaction O-phospho-L-tyrosyl-[protein] + H2O = L-tyrosyl-[protein] + phosphate. In terms of biological role, may be involved in both signal transduction and cellular adhesion in the CNS. May have specific signaling roles in the tyrosine phosphorylation/dephosphorylation pathway in the anterior compartment of the adult cerebellar cortex. The sequence is that of Receptor-type tyrosine-protein phosphatase T (Ptprt) from Mus musculus (Mouse).